Consider the following 228-residue polypeptide: Ribose-5-phosphate isomerase A (228 aa).

Substrate contacts are provided by residues 31-34 (TGST), 85-88 (DGAD), and 97-100 (KGGG). The Proton acceptor role is filled by Glu106. Residue Lys124 participates in substrate binding.

The protein belongs to the ribose 5-phosphate isomerase family. As to quaternary structure, homodimer.

The catalysed reaction is aldehydo-D-ribose 5-phosphate = D-ribulose 5-phosphate. Its pathway is carbohydrate degradation; pentose phosphate pathway; D-ribose 5-phosphate from D-ribulose 5-phosphate (non-oxidative stage): step 1/1. Functionally, catalyzes the reversible conversion of ribose-5-phosphate to ribulose 5-phosphate. The sequence is that of Ribose-5-phosphate isomerase A from Haloarcula marismortui (strain ATCC 43049 / DSM 3752 / JCM 8966 / VKM B-1809) (Halobacterium marismortui).